Here is a 508-residue protein sequence, read N- to C-terminus: E3 ubiquitin-protein ligase XBAT32 (508 aa).

5 ANK repeats span residues 50–79 (VRNSPLHYSAAQGHHEIVSLLVESGVDINL), 83–112 (RGQTALMQACQHGHWEVVLILILFGANIHR), 117–147 (NGGTALHLAALNGHPRCIRILLSEYIPSVPN), 177–206 (GGITPLHVAALNGHIETVQLLLDLGASVTQ), and 220–249 (AGSTALHYASCGGNTQCCQLLISKGACLAA). The RING-type zinc-finger motif lies at 321 to 372 (CAVCLERKCTVAADGCAHEFCTNCALYLSTTSITSSKTSNVTPGSVPCPLCR).

As to quaternary structure, interacts with ACS4 and ACS7. Expressed in the vascular system of primary root, vascular tissue of leaves, stems and anthers.

The enzyme catalyses S-ubiquitinyl-[E2 ubiquitin-conjugating enzyme]-L-cysteine + [acceptor protein]-L-lysine = [E2 ubiquitin-conjugating enzyme]-L-cysteine + N(6)-ubiquitinyl-[acceptor protein]-L-lysine.. It functions in the pathway protein modification; protein ubiquitination. Its function is as follows. E3 ubiquitin-protein ligase that mediates ubiquitination of ACC synthases (ACS). Negatively regulates ethylene biosynthesis probably via ubiquitin-dependent degradation of ACS4 and ACS7 enzymes. Regulates lateral root formation and development by controlling ethylene production which inhibits lateral root formation at high concentration. The chain is E3 ubiquitin-protein ligase XBAT32 (XBAT32) from Arabidopsis thaliana (Mouse-ear cress).